Reading from the N-terminus, the 336-residue chain is Large ribosomal subunit protein uL1 (336 aa).

The segment at 1-245 is large ribosomal subunit protein uL1; the sequence is MANQKKVTNK…VKKTAKGKVI (245 aa). The tract at residues 246–336 is unknown; the sequence is ADDSAKGENK…DVKKAKTSKK (91 aa). Residues 267–336 are disordered; that stretch reads AQKKKPSKHP…DVKKAKTSKK (70 aa). Basic residues predominate over residues 286-305; it reads KKKKVKKILKKAKPAKKAAV. A compositionally biased stretch (low complexity) spans 306 to 315; the sequence is AKKPVVVNKK.

This sequence belongs to the universal ribosomal protein uL1 family. In terms of assembly, part of the 50S ribosomal subunit.

Binds directly to 23S rRNA. The L1 stalk is quite mobile in the ribosome, and is involved in E site tRNA release. Functionally, protein L1 is also a translational repressor protein, it controls the translation of the L11 operon by binding to its mRNA. The sequence is that of Large ribosomal subunit protein uL1 from Malacoplasma penetrans (strain HF-2) (Mycoplasma penetrans).